The chain runs to 353 residues: Photosystem II D2 protein (353 aa).

Thr-2 is modified (N-acetylthreonine). Thr-2 is subject to Phosphothreonine. A helical transmembrane segment spans residues 41–61; it reads CAYFALGGWFTGTTFVTSWYT. Chlorophyll a is bound at residue His-118. A helical transmembrane segment spans residues 125 to 141; sequence GFMLRQFELARSVQLRP. 2 residues coordinate pheophytin a: Gln-130 and Asn-143. The chain crosses the membrane as a helical span at residues 153–166; the sequence is VFVSVFLIYPLGQS. A chlorophyll a-binding site is contributed by His-198. A helical membrane pass occupies residues 208–228; that stretch reads AALLCAIHGATVENTLFEDGD. Residues His-215 and Phe-262 each coordinate a plastoquinone. His-215 is a binding site for Fe cation. Residue His-269 participates in Fe cation binding. A helical transmembrane segment spans residues 279–295; sequence GLWMSALGVVGLALNLR.

This sequence belongs to the reaction center PufL/M/PsbA/D family. PSII is composed of 1 copy each of membrane proteins PsbA, PsbB, PsbC, PsbD, PsbE, PsbF, PsbH, PsbI, PsbJ, PsbK, PsbL, PsbM, PsbT, PsbX, PsbY, PsbZ, Psb30/Ycf12, at least 3 peripheral proteins of the oxygen-evolving complex and a large number of cofactors. It forms dimeric complexes. The D1/D2 heterodimer binds P680, chlorophylls that are the primary electron donor of PSII, and subsequent electron acceptors. It shares a non-heme iron and each subunit binds pheophytin, quinone, additional chlorophylls, carotenoids and lipids. There is also a Cl(-1) ion associated with D1 and D2, which is required for oxygen evolution. The PSII complex binds additional chlorophylls, carotenoids and specific lipids. serves as cofactor.

It localises to the plastid. The protein localises to the chloroplast thylakoid membrane. The catalysed reaction is 2 a plastoquinone + 4 hnu + 2 H2O = 2 a plastoquinol + O2. Functionally, photosystem II (PSII) is a light-driven water:plastoquinone oxidoreductase that uses light energy to abstract electrons from H(2)O, generating O(2) and a proton gradient subsequently used for ATP formation. It consists of a core antenna complex that captures photons, and an electron transfer chain that converts photonic excitation into a charge separation. The D1/D2 (PsbA/PsbD) reaction center heterodimer binds P680, the primary electron donor of PSII as well as several subsequent electron acceptors. D2 is needed for assembly of a stable PSII complex. The chain is Photosystem II D2 protein from Pelargonium hortorum (Common geranium).